Consider the following 271-residue polypeptide: Protein PXR1 (271 aa).

The G-patch domain maps to 25-72; that stretch reads TSRFGHQFLEKFGWKPGMGLGLYPMNSNTSHIKVSIKDDNVGLGAKLK. Residues 147–239 form a disordered region; sequence SNAKKRKREG…SASNIPDAVN (93 aa). Residues 157–168 show a composition bias toward acidic residues; that stretch reads DDSEDEDDDDKE. Positions 175–203 are enriched in basic residues; sequence KKHKKHKKHKKDKKKDKKDKKEHKKHKKE. Residues 204-221 are compositionally biased toward basic and acidic residues; that stretch reads EKRLKKEKRAEKTKETKK. Position 230 is a phosphoserine (S230).

The protein belongs to the PINX1 family. Interacts with EST2.

Its subcellular location is the nucleus. The protein localises to the nucleolus. Functionally, involved in rRNA-processing at A0, A1 and A2 sites through its action in U18 and U24 snoRNA 3'-end final trimming. Negative regulator of telomerase throughX competition for binding to EST2 with TLC1. The protein is Protein PXR1 (PXR1) of Saccharomyces cerevisiae (strain YJM789) (Baker's yeast).